We begin with the raw amino-acid sequence, 232 residues long: Clarin-1 (232 aa).

Residues 8 to 28 (IIFCMAGVFSFACALGVVTAL) traverse the membrane as a helical segment. Residue N48 is glycosylated (N-linked (GlcNAc...) asparagine). 2 consecutive transmembrane segments (helical) span residues 101–121 (IILF…FFMY) and 135–155 (LGLY…MILF). N184 carries an N-linked (GlcNAc...) asparagine glycan. The chain crosses the membrane as a helical span at residues 186–206 (TTSFWVVFICFFVHFLNGLLI).

Belongs to the clarin family.

Its subcellular location is the cell membrane. Functionally, may have a role in the excitatory ribbon synapse junctions between hair cells and cochlear ganglion cells and presumably also in analogous synapses within the retina. This chain is Clarin-1 (Clrn1), found in Rattus norvegicus (Rat).